Reading from the N-terminus, the 137-residue chain is Large ribosomal subunit protein uL16c (137 aa).

The protein belongs to the universal ribosomal protein uL16 family. In terms of assembly, part of the 50S ribosomal subunit.

It is found in the plastid. It localises to the chloroplast. The polypeptide is Large ribosomal subunit protein uL16c (Trieres chinensis (Marine centric diatom)).